The chain runs to 472 residues: NALCN channel auxiliary factor 2 (472 aa).

A helical membrane pass occupies residues 47-67 (LASLLFFTVLLADHLWLCAGA). Positions 77–114 (AMRPPWGAGRERQPVPPRAVLPLPPPPPGEPSAPPGTC) are disordered. Over residues 90–110 (PVPPRAVLPLPPPPPGEPSAP) the composition is skewed to pro residues. Residues Asn-120 and Asn-193 are each glycosylated (N-linked (GlcNAc...) asparagine). A helical membrane pass occupies residues 433–453 (LCVLVLMLLHTVVSFSSNQGG).

This sequence belongs to the NALF family.

It is found in the membrane. Functionally, probable component of the NALCN channel complex, a channel that regulates the resting membrane potential and controls neuronal excitability. The chain is NALCN channel auxiliary factor 2 from Homo sapiens (Human).